Reading from the N-terminus, the 76-residue chain is uncharacterized protein (76 aa).

This is an uncharacterized protein from Dictyostelium discoideum (Social amoeba).